A 357-amino-acid chain; its full sequence is Peptide chain release factor 1 (357 aa).

Glutamine 236 is modified (N5-methylglutamine). Over residues 284 to 293 (RRKKDQERAN) the composition is skewed to basic and acidic residues. Residues 284-313 (RRKKDQERANNRRKQIGSGDRSERIRTYNF) form a disordered region.

Belongs to the prokaryotic/mitochondrial release factor family. Methylated by PrmC. Methylation increases the termination efficiency of RF1.

It is found in the cytoplasm. Peptide chain release factor 1 directs the termination of translation in response to the peptide chain termination codons UAG and UAA. The polypeptide is Peptide chain release factor 1 (Rickettsia bellii (strain RML369-C)).